We begin with the raw amino-acid sequence, 351 residues long: Dihydroorotate dehydrogenase (quinone) (351 aa).

FMN contacts are provided by residues 61–65 (AGLDK) and T85. K65 is a substrate binding site. Residue 110–114 (NRMGF) participates in substrate binding. Residues N139 and N172 each coordinate FMN. N172 contacts substrate. S175 acts as the Nucleophile in catalysis. Residue N177 participates in substrate binding. FMN-binding residues include K217 and T245. Position 246–247 (246–247 (NT)) interacts with substrate. Residues G268, G297, and 318–319 (YS) each bind FMN.

This sequence belongs to the dihydroorotate dehydrogenase family. Type 2 subfamily. In terms of assembly, monomer. FMN serves as cofactor.

It is found in the cell membrane. It carries out the reaction (S)-dihydroorotate + a quinone = orotate + a quinol. It functions in the pathway pyrimidine metabolism; UMP biosynthesis via de novo pathway; orotate from (S)-dihydroorotate (quinone route): step 1/1. In terms of biological role, catalyzes the conversion of dihydroorotate to orotate with quinone as electron acceptor. This Xanthomonas oryzae pv. oryzae (strain MAFF 311018) protein is Dihydroorotate dehydrogenase (quinone).